Here is a 304-residue protein sequence, read N- to C-terminus: uncharacterized protein (304 aa).

It belongs to the histone deacetylase family.

Putative deacetylase. This is an uncharacterized protein from Synechocystis sp. (strain ATCC 27184 / PCC 6803 / Kazusa).